Here is a 373-residue protein sequence, read N- to C-terminus: MKSSTFGMLALAAAAKLVSAHTTVHAVWINDVDQGEGNSQSGYIRSPPSNSPITDVTSKDMTCNVNNKATAKTLEVKAGDKITFEWHHDSRSESDDIIASSHNGPILVYMAPTEKGTAGNGWVKIAEDGYTDGTWAVETLIKNRGKHSVTVPDVAAGEYLFRPEIIALHEGNREGGAQFYMECVQVKVTSSGSKTLPEGVSIPGAYTATDKGILFNIYDSFDSYPIPGPAVWDGASGSSSSSSSSASASAPAPTSAAPAPSSFTTIAKQPATSSSTEAPSTENTPSETTSTTSAIVSTTAVASTTAPATPSTTSAIASSAAPTNSVPQPSSNAGGAVKEWYQCGGLNYSGSTQCEEGLTCKKWNPYYHQCVSA.

An N-terminal signal peptide occupies residues 1–20 (MKSSTFGMLALAAAAKLVSA). H21 is a Cu(2+) binding site. The segment at 36 to 55 (EGNSQSGYIRSPPSNSPITD) is disordered. The cysteines at positions 63 and 183 are disulfide-linked. H102 is a binding site for Cu(2+). H169 and Q178 together coordinate O2. Y180 is a binding site for Cu(2+). Positions 234–333 (GASGSSSSSS…NSVPQPSSNA (100 aa)) are disordered. Low complexity-rich tracts occupy residues 235–262 (ASGSSSSSSSSASASAPAPTSAAPAPSS) and 270–323 (PATS…AAPT). Over residues 324–333 (NSVPQPSSNA) the composition is skewed to polar residues. In terms of domain architecture, CBM1 spans 335–371 (GAVKEWYQCGGLNYSGSTQCEEGLTCKKWNPYYHQCV). N347 is a glycosylation site (N-linked (GlcNAc...) asparagine).

The protein belongs to the polysaccharide monooxygenase AA9 family. Cu(2+) serves as cofactor.

The protein localises to the secreted. It catalyses the reaction [(1-&gt;4)-beta-D-glucosyl]n+m + reduced acceptor + O2 = 4-dehydro-beta-D-glucosyl-[(1-&gt;4)-beta-D-glucosyl]n-1 + [(1-&gt;4)-beta-D-glucosyl]m + acceptor + H2O.. Its function is as follows. Lytic polysaccharide monooxygenase (LPMO) that depolymerizes crystalline and amorphous polysaccharides via the oxidation of scissile alpha- or beta-(1-4)-glycosidic bonds, yielding exclusively C4 oxidation products. Catalysis by LPMOs requires the reduction of the active-site copper from Cu(II) to Cu(I) by a reducing agent and H(2)O(2) or O(2) as a cosubstrate. In addition to cellulose, also cleaves the beta-(1!4)-glucan backbone of tamarind xyloglucan, but only next to unsubstituted glucosyl units. In Aspergillus tamarii, this protein is AA9 family lytic polysaccharide monooxygenase A.